Here is a 429-residue protein sequence, read N- to C-terminus: Mannose-6-phosphate isomerase (429 aa).

Residues glutamine 109, histidine 111, glutamate 136, and histidine 281 each coordinate Zn(2+). Arginine 300 is an active-site residue.

Belongs to the mannose-6-phosphate isomerase type 1 family. Zn(2+) serves as cofactor.

It is found in the cytoplasm. The enzyme catalyses D-mannose 6-phosphate = D-fructose 6-phosphate. It functions in the pathway nucleotide-sugar biosynthesis; GDP-alpha-D-mannose biosynthesis; alpha-D-mannose 1-phosphate from D-fructose 6-phosphate: step 1/2. Functionally, involved in the synthesis of the GDP-mannose and dolichol-phosphate-mannose required for a number of critical mannosyl transfer reactions. In Eremothecium gossypii (strain ATCC 10895 / CBS 109.51 / FGSC 9923 / NRRL Y-1056) (Yeast), this protein is Mannose-6-phosphate isomerase (PMI1).